The sequence spans 299 residues: Protease HtpX homolog (299 aa).

2 consecutive transmembrane segments (helical) span residues 7-24 (GILM…GALI) and 29-46 (GAII…FTFW). H130 lines the Zn(2+) pocket. Residue E131 is part of the active site. H134 contributes to the Zn(2+) binding site. Helical transmembrane passes span 145–165 (VTAT…FFGG) and 174–194 (PVGI…AGLV). Position 203 (E203) interacts with Zn(2+).

The protein belongs to the peptidase M48B family. The cofactor is Zn(2+).

It localises to the cell inner membrane. The chain is Protease HtpX homolog from Cereibacter sphaeroides (strain ATCC 17025 / ATH 2.4.3) (Rhodobacter sphaeroides).